Here is a 223-residue protein sequence, read N- to C-terminus: Adenylate kinase (223 aa).

10-15 (GSGKGT) is an ATP binding site. Residues 30 to 59 (ESGAIFRKHIGGGTELGMKAKEYIDKGELV) form an NMP region. Residues Ser-31, Arg-36, 57–59 (ELV), 84–87 (GFPR), and Gln-91 contribute to the AMP site. An LID region spans residues 125 to 164 (GRRLCENDPNHPNNKFIDAIKPDGDKCRVCGGALSERADD). Arg-126 contacts ATP. AMP is bound by residues Arg-161 and Arg-173. Gly-209 lines the ATP pocket.

Belongs to the adenylate kinase family. As to quaternary structure, monomer.

The protein localises to the cytoplasm. The enzyme catalyses AMP + ATP = 2 ADP. The protein operates within purine metabolism; AMP biosynthesis via salvage pathway; AMP from ADP: step 1/1. Catalyzes the reversible transfer of the terminal phosphate group between ATP and AMP. Plays an important role in cellular energy homeostasis and in adenine nucleotide metabolism. This is Adenylate kinase from Maridesulfovibrio salexigens (strain ATCC 14822 / DSM 2638 / NCIMB 8403 / VKM B-1763) (Desulfovibrio salexigens).